Consider the following 533-residue polypeptide: Subtilisin-like protease 1 (533 aa).

The first 19 residues, 1 to 19, serve as a signal peptide directing secretion; the sequence is MGVFRFISISLAAVSAANA. The propeptide occupies 20–116; it reads AQILSMPHAQ…VEPDTIISVH (97 aa). The Inhibitor I9 domain maps to 34–115; that stretch reads SYIVMMKDDT…FVEPDTIISV (82 aa). Residues 126-400 form the Peptidase S8 domain; it reads SWGLARISNP…NVLINNGGAK (275 aa). Residues aspartate 158 and histidine 190 each act as charge relay system in the active site. Positions 175–198 are disordered; the sequence is GSNQVNDGDDRDGSGHGTHTSGTM. N-linked (GlcNAc...) asparagine glycosylation is found at asparagine 233 and asparagine 251. Polar residues predominate over residues 282–294; it reads NDNQDAQSSSPAS. The disordered stretch occupies residues 282–312; the sequence is NDNQDAQSSSPASEPSVCTVGSSAEDDSRSS. Serine 345 serves as the catalytic Charge relay system. Positions 378 to 394 are enriched in polar residues; the sequence is TSSITDAGPGTPTNVLI. The segment at 378-512 is disordered; that stretch reads TSSITDAGPG…YPGGDNFDFD (135 aa). Positions 405–470 are enriched in pro residues; it reads NPNPAPSPSP…FPGEPFPGEP (66 aa). Low complexity predominate over residues 471-487; sequence FPGESFPGESFPGESAP. Residues 488–502 are compositionally biased toward pro residues; the sequence is APAPMPPSPQHPHTP.

This sequence belongs to the peptidase S8 family.

It is found in the secreted. Secreted subtilisin-like serine protease with keratinolytic activity that contributes to pathogenicity. This chain is Subtilisin-like protease 1 (SUB1), found in Arthroderma benhamiae (strain ATCC MYA-4681 / CBS 112371) (Trichophyton mentagrophytes).